A 406-amino-acid chain; its full sequence is Phosphopentomutase (406 aa).

Residues aspartate 10, aspartate 305, histidine 310, aspartate 346, histidine 347, and histidine 358 each coordinate Mn(2+).

It belongs to the phosphopentomutase family. It depends on Mn(2+) as a cofactor.

The protein resides in the cytoplasm. The enzyme catalyses 2-deoxy-alpha-D-ribose 1-phosphate = 2-deoxy-D-ribose 5-phosphate. The catalysed reaction is alpha-D-ribose 1-phosphate = D-ribose 5-phosphate. The protein operates within carbohydrate degradation; 2-deoxy-D-ribose 1-phosphate degradation; D-glyceraldehyde 3-phosphate and acetaldehyde from 2-deoxy-alpha-D-ribose 1-phosphate: step 1/2. Functionally, isomerase that catalyzes the conversion of deoxy-ribose 1-phosphate (dRib-1-P) and ribose 1-phosphate (Rib-1-P) to deoxy-ribose 5-phosphate (dRib-5-P) and ribose 5-phosphate (Rib-5-P), respectively. In Rhizobium leguminosarum bv. trifolii (strain WSM2304), this protein is Phosphopentomutase.